Consider the following 195-residue polypeptide: Penicillin-binding protein activator LpoB (195 aa).

The first 16 residues, 1–16 (MKKYLFVALAALVLTG), serve as a signal peptide directing secretion. The N-palmitoyl cysteine moiety is linked to residue C17. Residue C17 is the site of S-diacylglycerol cysteine attachment. The interval 19–55 (SRPPEPEQPQPPVTVEPVTPPVVEEPQPPVTEPVPQP) is disordered. Composition is skewed to pro residues over residues 24-38 (PEQP…PVTP) and 44-55 (PQPPVTEPVPQP).

Belongs to the LpoB family. In terms of assembly, interacts with PBP1b.

The protein resides in the cell outer membrane. Its function is as follows. Regulator of peptidoglycan synthesis that is essential for the function of penicillin-binding protein 1B (PBP1b). The sequence is that of Penicillin-binding protein activator LpoB from Serratia proteamaculans (strain 568).